The following is a 344-amino-acid chain: NDP-polyphosphate phosphotransferase 2 (344 aa).

The segment at 1 to 60 is disordered; the sequence is METAKPIAPQKDSKANGVDATDPVVKVASPQDPAGDAKVEDATAPVAEVEPRTPRNRRLP.

The protein belongs to the polyphosphate kinase 2 (PPK2) family. Class I subfamily. Requires Mg(2+) as cofactor.

The enzyme catalyses [phosphate](n) + ATP = [phosphate](n+1) + ADP. It carries out the reaction [phosphate](n) + CTP = [phosphate](n+1) + CDP. It catalyses the reaction [phosphate](n) + GTP = [phosphate](n+1) + GDP. The catalysed reaction is [phosphate](n) + UTP = [phosphate](n+1) + UDP. Uses inorganic polyphosphate (polyP) as a donor to convert NDP to NTP. PolyP hydrolysis is slightly faster with ADP, but it can also use GDP, CDP and UDP. In Ruegeria pomeroyi (strain ATCC 700808 / DSM 15171 / DSS-3) (Silicibacter pomeroyi), this protein is NDP-polyphosphate phosphotransferase 2.